The primary structure comprises 248 residues: Triosephosphate isomerase (248 aa).

9–11 (NWK) contacts substrate. The active-site Electrophile is the His-94. The Proton acceptor role is filled by Glu-166. Substrate-binding positions include Gly-172, Ser-212, and 233–234 (GG).

The protein belongs to the triosephosphate isomerase family. Homodimer.

The protein localises to the cytoplasm. The enzyme catalyses D-glyceraldehyde 3-phosphate = dihydroxyacetone phosphate. Its pathway is carbohydrate biosynthesis; gluconeogenesis. The protein operates within carbohydrate degradation; glycolysis; D-glyceraldehyde 3-phosphate from glycerone phosphate: step 1/1. Functionally, involved in the gluconeogenesis. Catalyzes stereospecifically the conversion of dihydroxyacetone phosphate (DHAP) to D-glyceraldehyde-3-phosphate (G3P). In Clostridium botulinum (strain Langeland / NCTC 10281 / Type F), this protein is Triosephosphate isomerase.